The primary structure comprises 496 residues: Glycerol kinase (496 aa).

Thr12 contributes to the ADP binding site. ATP contacts are provided by Thr12, Thr13, and Ser14. Residue Thr12 participates in sn-glycerol 3-phosphate binding. An ADP-binding site is contributed by Arg16. Sn-glycerol 3-phosphate-binding residues include Arg82, Glu83, and Tyr134. Arg82, Glu83, and Tyr134 together coordinate glycerol. His230 is modified (phosphohistidine; by HPr). Asp244 contacts sn-glycerol 3-phosphate. Residues Asp244 and Gln245 each coordinate glycerol. The ADP site is built by Thr266 and Gly309. ATP contacts are provided by Thr266, Gly309, Gln313, and Gly410. Residues Gly410 and Asn414 each coordinate ADP.

It belongs to the FGGY kinase family. As to quaternary structure, homotetramer and homodimer (in equilibrium). Post-translationally, the phosphoenolpyruvate-dependent sugar phosphotransferase system (PTS), including enzyme I, and histidine-containing protein (HPr) are required for the phosphorylation, which leads to the activation of the enzyme.

The enzyme catalyses glycerol + ATP = sn-glycerol 3-phosphate + ADP + H(+). The protein operates within polyol metabolism; glycerol degradation via glycerol kinase pathway; sn-glycerol 3-phosphate from glycerol: step 1/1. Activated by phosphorylation and inhibited by fructose 1,6-bisphosphate (FBP). In terms of biological role, key enzyme in the regulation of glycerol uptake and metabolism. Catalyzes the phosphorylation of glycerol to yield sn-glycerol 3-phosphate. The chain is Glycerol kinase from Bacillus anthracis (strain A0248).